A 120-amino-acid chain; its full sequence is Immunoglobulin kappa variable 2D-28 (120 aa).

The signal sequence occupies residues M1 to S19. One can recognise an Ig-like domain in the interval G20–P120. A framework-1 region spans residues D21–C43. C43 and C113 are disulfide-bonded. A complementarity-determining-1 region spans residues R44 to D59. The framework-2 stretch occupies residues W60 to Y74. Positions L75–S81 are complementarity-determining-2. The segment at G82–C113 is framework-3. A complementarity-determining-3 region spans residues M114 to P120.

Immunoglobulins are composed of two identical heavy chains and two identical light chains; disulfide-linked.

It is found in the secreted. The protein resides in the cell membrane. Its function is as follows. V region of the variable domain of immunoglobulin light chains that participates in the antigen recognition. Immunoglobulins, also known as antibodies, are membrane-bound or secreted glycoproteins produced by B lymphocytes. In the recognition phase of humoral immunity, the membrane-bound immunoglobulins serve as receptors which, upon binding of a specific antigen, trigger the clonal expansion and differentiation of B lymphocytes into immunoglobulins-secreting plasma cells. Secreted immunoglobulins mediate the effector phase of humoral immunity, which results in the elimination of bound antigens. The antigen binding site is formed by the variable domain of one heavy chain, together with that of its associated light chain. Thus, each immunoglobulin has two antigen binding sites with remarkable affinity for a particular antigen. The variable domains are assembled by a process called V-(D)-J rearrangement and can then be subjected to somatic hypermutations which, after exposure to antigen and selection, allow affinity maturation for a particular antigen. In Homo sapiens (Human), this protein is Immunoglobulin kappa variable 2D-28.